Reading from the N-terminus, the 279-residue chain is uncharacterized protein (279 aa).

The first 21 residues, 1–21 (MKIIRTLFLLLIAVYGSSVVA), serve as a signal peptide directing secretion.

It to E.coli YfcO.

This is an uncharacterized protein from Salmonella typhimurium (strain LT2 / SGSC1412 / ATCC 700720).